The chain runs to 482 residues: Nuclear transcription factor Y subunit nfya-1 (482 aa).

The interval 1–160 (MNGASRGDVQ…NGSYIQYNEP (160 aa)) is disordered. Positions 72 to 93 (SSPNVQTQCHQPPVVRSQTHQA) are enriched in polar residues. The span at 94–110 (SVSQTTPTQTTPSQYTP) shows a compositional bias: low complexity. 2 stretches are compositionally biased toward polar residues: residues 126 to 135 (HVTPSQQQRI) and 144 to 160 (VSQSQPQNGSYIQYNEP). The Subunit association domain (SAD) motif lies at 306-329 (LVNPKQFNRIMRRREMRQQLEASG). The segment at residues 336–361 (QKYLHESRHLHALKRKRGLDGRFDNT) is a DNA-binding region (NFYA/HAP2-type). The tract at residues 344–414 (HLHALKRKRG…QPKGGIVNSS (71 aa)) is disordered. Basic and acidic residues predominate over residues 353–362 (GLDGRFDNTK). Low complexity predominate over residues 363 to 375 (TAESSSMVSSTTS).

This sequence belongs to the NFYA/HAP2 subunit family. As to quaternary structure, forms a heterotrimeric transcription factor complex (nfya-1-NF-Y complex) composed of nfya-1, nfyb-1 and nfyc-1, which binds to 5'-CCAAT-3' box motif in the promoters of its target genes. Interacts with the nfyb-1 and nfyc-1 dimer; the interaction is required for subsequent binding to the 5'-CCAAT-3' box motif in DNA. Does not interact with either nfyb-1 or nfyc-1 in their monomeric form. Interacts with mes-3. In terms of tissue distribution, expressed in certain parts of the gonads with high expression in fertilized oocytes in the uterus and mature oocytes from the distal to the proximal arm of the gonad, but weak expression in the syncytial ovaries and immature oocytes at the beginning of the proximal arm of the gonad. Highly expressed in the head ganglia neurons and the developing hermaphrodite vulva and male tail. Weakly expressed in most somatic cells. Not expressed in the intestine, the hypodermis, body wall muscle surrounding the pseudocoelomic space, secretory cells in the pharyngeal terminal bulb wall, in the small ganglia surrounding the pharynx and in the neurons running anteriorly to the sensory organs in the head.

Its subcellular location is the nucleus. Component of the sequence-specific heterotrimeric transcription factor (nfya-1-NF-Y) which specifically recognizes a 5'-CCAAT-3' box motif found in the promoters of its target genes to regulate their expression and control cellular identity in particular tissue types. In association with the components in the nfya-1-NF-Y complex, represses the expression of the T-box transcription factor tbx-2 throughout larval development, which most likely restricts its expression to certain tissues. May act to repress txb-2 expression in conjunction with tbx-2 itself, which has an autoregulatory role. With the components in this complex, negatively regulates the expression of the homeobox protein egl-5 to spatially restrict its expression in tissues such as the head. May regulate egl-5 expression in association with the mes-2-mes-3-mes-6 complex. This chain is Nuclear transcription factor Y subunit nfya-1, found in Caenorhabditis elegans.